We begin with the raw amino-acid sequence, 486 residues long: Malonate-semialdehyde dehydrogenase (486 aa).

NAD(+) contacts are provided by phenylalanine 154, lysine 178, glutamate 181, arginine 182, and serine 231. The active-site Nucleophile is cysteine 286. Glutamate 386 provides a ligand contact to NAD(+).

It belongs to the aldehyde dehydrogenase family. IolA subfamily. In terms of assembly, homotetramer.

The enzyme catalyses 3-oxopropanoate + NAD(+) + CoA + H2O = hydrogencarbonate + acetyl-CoA + NADH + H(+). The catalysed reaction is 2-methyl-3-oxopropanoate + NAD(+) + CoA + H2O = propanoyl-CoA + hydrogencarbonate + NADH + H(+). It participates in polyol metabolism; myo-inositol degradation into acetyl-CoA; acetyl-CoA from myo-inositol: step 7/7. Functionally, catalyzes the oxidation of malonate semialdehyde (MSA) and methylmalonate semialdehyde (MMSA) into acetyl-CoA and propanoyl-CoA, respectively. Is involved in a myo-inositol catabolic pathway. Bicarbonate, and not CO2, is the end-product of the enzymatic reaction. The sequence is that of Malonate-semialdehyde dehydrogenase from Bacillus cereus (strain G9842).